A 540-amino-acid chain; its full sequence is Chaperonin GroEL (540 aa).

ATP contacts are provided by residues T29–P32, D86–T90, G413, N476–A478, and D492.

It belongs to the chaperonin (HSP60) family. In terms of assembly, forms a cylinder of 14 subunits composed of two heptameric rings stacked back-to-back. Interacts with the co-chaperonin GroES.

Its subcellular location is the cytoplasm. It carries out the reaction ATP + H2O + a folded polypeptide = ADP + phosphate + an unfolded polypeptide.. Together with its co-chaperonin GroES, plays an essential role in assisting protein folding. The GroEL-GroES system forms a nano-cage that allows encapsulation of the non-native substrate proteins and provides a physical environment optimized to promote and accelerate protein folding. The chain is Chaperonin GroEL from Streptococcus pneumoniae (strain ATCC 700669 / Spain 23F-1).